A 364-amino-acid polypeptide reads, in one-letter code: Fructose-bisphosphate aldolase B (364 aa).

The substrate site is built by R56 and K147. E188 (proton acceptor) is an active-site residue. The Schiff-base intermediate with dihydroxyacetone-P role is filled by K230.

Belongs to the class I fructose-bisphosphate aldolase family. Homotetramer.

The protein localises to the cytoplasm. It is found in the cytoskeleton. It localises to the microtubule organizing center. Its subcellular location is the centrosome. The protein resides in the centriolar satellite. The enzyme catalyses beta-D-fructose 1,6-bisphosphate = D-glyceraldehyde 3-phosphate + dihydroxyacetone phosphate. The protein operates within carbohydrate degradation; glycolysis; D-glyceraldehyde 3-phosphate and glycerone phosphate from D-glucose: step 4/4. In Sparus aurata (Gilthead sea bream), this protein is Fructose-bisphosphate aldolase B (aldob).